Consider the following 125-residue polypeptide: Ribosome-binding factor A (125 aa).

It belongs to the RbfA family. Monomer. Binds 30S ribosomal subunits, but not 50S ribosomal subunits or 70S ribosomes.

The protein localises to the cytoplasm. In terms of biological role, one of several proteins that assist in the late maturation steps of the functional core of the 30S ribosomal subunit. Associates with free 30S ribosomal subunits (but not with 30S subunits that are part of 70S ribosomes or polysomes). Required for efficient processing of 16S rRNA. May interact with the 5'-terminal helix region of 16S rRNA. This is Ribosome-binding factor A from Xylella fastidiosa (strain M12).